We begin with the raw amino-acid sequence, 342 residues long: S-adenosylmethionine:tRNA ribosyltransferase-isomerase (342 aa).

This sequence belongs to the QueA family. In terms of assembly, monomer.

The protein resides in the cytoplasm. The enzyme catalyses 7-aminomethyl-7-carbaguanosine(34) in tRNA + S-adenosyl-L-methionine = epoxyqueuosine(34) in tRNA + adenine + L-methionine + 2 H(+). The protein operates within tRNA modification; tRNA-queuosine biosynthesis. In terms of biological role, transfers and isomerizes the ribose moiety from AdoMet to the 7-aminomethyl group of 7-deazaguanine (preQ1-tRNA) to give epoxyqueuosine (oQ-tRNA). The sequence is that of S-adenosylmethionine:tRNA ribosyltransferase-isomerase from Sulfurimonas denitrificans (strain ATCC 33889 / DSM 1251) (Thiomicrospira denitrificans (strain ATCC 33889 / DSM 1251)).